Consider the following 406-residue polypeptide: uncharacterized protein (406 aa).

Positions 136–153 (SQKNWGSEKNWNSPSQGP) are enriched in polar residues. Residues 136–157 (SQKNWGSEKNWNSPSQGPASRE) are disordered.

This is an uncharacterized protein from Rattus norvegicus (Rat).